A 151-amino-acid chain; its full sequence is Large ribosomal subunit protein bL9 (151 aa).

It belongs to the bacterial ribosomal protein bL9 family.

Binds to the 23S rRNA. The polypeptide is Large ribosomal subunit protein bL9 (Bordetella bronchiseptica (strain ATCC BAA-588 / NCTC 13252 / RB50) (Alcaligenes bronchisepticus)).